The primary structure comprises 360 residues: Peptide chain release factor 1 (360 aa).

Gln-235 is subject to N5-methylglutamine.

The protein belongs to the prokaryotic/mitochondrial release factor family. In terms of processing, methylated by PrmC. Methylation increases the termination efficiency of RF1.

It is found in the cytoplasm. In terms of biological role, peptide chain release factor 1 directs the termination of translation in response to the peptide chain termination codons UAG and UAA. This chain is Peptide chain release factor 1, found in Mannheimia succiniciproducens (strain KCTC 0769BP / MBEL55E).